Here is a 187-residue protein sequence, read N- to C-terminus: Elongation factor P (187 aa).

Belongs to the elongation factor P family.

It is found in the cytoplasm. It participates in protein biosynthesis; polypeptide chain elongation. Functionally, involved in peptide bond synthesis. Stimulates efficient translation and peptide-bond synthesis on native or reconstituted 70S ribosomes in vitro. Probably functions indirectly by altering the affinity of the ribosome for aminoacyl-tRNA, thus increasing their reactivity as acceptors for peptidyl transferase. The chain is Elongation factor P from Leifsonia xyli subsp. xyli (strain CTCB07).